Here is a 238-residue protein sequence, read N- to C-terminus: Ribonuclease PH (238 aa).

The interval 67-87 (PRSTHTRSDREAARGKQSGRT) is disordered. Phosphate-binding positions include Arg-86 and 124 to 126 (GTR).

Belongs to the RNase PH family. As to quaternary structure, homohexameric ring arranged as a trimer of dimers.

The catalysed reaction is tRNA(n+1) + phosphate = tRNA(n) + a ribonucleoside 5'-diphosphate. Its function is as follows. Phosphorolytic 3'-5' exoribonuclease that plays an important role in tRNA 3'-end maturation. Removes nucleotide residues following the 3'-CCA terminus of tRNAs; can also add nucleotides to the ends of RNA molecules by using nucleoside diphosphates as substrates, but this may not be physiologically important. Probably plays a role in initiation of 16S rRNA degradation (leading to ribosome degradation) during starvation. This chain is Ribonuclease PH, found in Ralstonia nicotianae (strain ATCC BAA-1114 / GMI1000) (Ralstonia solanacearum).